A 755-amino-acid chain; its full sequence is Catalase-peroxidase (755 aa).

The tryptophyl-tyrosyl-methioninium (Trp-Tyr) (with M-267) cross-link spans 93-241 (WHSAGTYRVF…LAAAHMGLIY (149 aa)). The Proton acceptor role is filled by H94. Residues 241–267 (YVNPEGPDGNPDPVAAARDIRVTFGRM) constitute a cross-link (tryptophyl-tyrosyl-methioninium (Tyr-Met) (with W-93)). H282 is a heme b binding site.

Belongs to the peroxidase family. Peroxidase/catalase subfamily. As to quaternary structure, homodimer or homotetramer. It depends on heme b as a cofactor. In terms of processing, formation of the three residue Trp-Tyr-Met cross-link is important for the catalase, but not the peroxidase activity of the enzyme.

It localises to the cytoplasm. It catalyses the reaction H2O2 + AH2 = A + 2 H2O. The enzyme catalyses 2 H2O2 = O2 + 2 H2O. In terms of biological role, bifunctional enzyme with both catalase and broad-spectrum peroxidase activity. This Podospora anserina (strain S / ATCC MYA-4624 / DSM 980 / FGSC 10383) (Pleurage anserina) protein is Catalase-peroxidase.